Here is a 427-residue protein sequence, read N- to C-terminus: 3-phosphoshikimate 1-carboxyvinyltransferase (427 aa).

The 3-phosphoshikimate site is built by lysine 22, serine 23, and arginine 27. Lysine 22 provides a ligand contact to phosphoenolpyruvate. The phosphoenolpyruvate site is built by glycine 96 and arginine 124. The 3-phosphoshikimate site is built by serine 169, serine 170, glutamine 171, serine 197, aspartate 313, asparagine 336, and lysine 340. Residue glutamine 171 participates in phosphoenolpyruvate binding. Aspartate 313 (proton acceptor) is an active-site residue. 3 residues coordinate phosphoenolpyruvate: arginine 344, arginine 386, and lysine 411.

It belongs to the EPSP synthase family. In terms of assembly, monomer.

The protein localises to the cytoplasm. The catalysed reaction is 3-phosphoshikimate + phosphoenolpyruvate = 5-O-(1-carboxyvinyl)-3-phosphoshikimate + phosphate. It functions in the pathway metabolic intermediate biosynthesis; chorismate biosynthesis; chorismate from D-erythrose 4-phosphate and phosphoenolpyruvate: step 6/7. Functionally, catalyzes the transfer of the enolpyruvyl moiety of phosphoenolpyruvate (PEP) to the 5-hydroxyl of shikimate-3-phosphate (S3P) to produce enolpyruvyl shikimate-3-phosphate and inorganic phosphate. The sequence is that of 3-phosphoshikimate 1-carboxyvinyltransferase from Klebsiella pneumoniae (strain 342).